The sequence spans 310 residues: 4-hydroxythreonine-4-phosphate dehydrogenase (310 aa).

Residue threonine 129 coordinates substrate. The a divalent metal cation site is built by histidine 158, histidine 202, and histidine 250. The substrate site is built by lysine 258, asparagine 267, and arginine 276.

This sequence belongs to the PdxA family. In terms of assembly, homodimer. A divalent metal cation serves as cofactor.

It localises to the cytoplasm. It catalyses the reaction 4-(phosphooxy)-L-threonine + NAD(+) = 3-amino-2-oxopropyl phosphate + CO2 + NADH. It functions in the pathway cofactor biosynthesis; pyridoxine 5'-phosphate biosynthesis; pyridoxine 5'-phosphate from D-erythrose 4-phosphate: step 4/5. Catalyzes the NAD(P)-dependent oxidation of 4-(phosphooxy)-L-threonine (HTP) into 2-amino-3-oxo-4-(phosphooxy)butyric acid which spontaneously decarboxylates to form 3-amino-2-oxopropyl phosphate (AHAP). The sequence is that of 4-hydroxythreonine-4-phosphate dehydrogenase from Hydrogenobaculum sp. (strain Y04AAS1).